A 454-amino-acid chain; its full sequence is Phosphoglucosamine mutase (454 aa).

The active-site Phosphoserine intermediate is the Ser101. Residues Ser101, Asp243, Asp245, and Asp247 each contribute to the Mg(2+) site. Ser101 is modified (phosphoserine).

It belongs to the phosphohexose mutase family. Requires Mg(2+) as cofactor. Post-translationally, activated by phosphorylation.

The enzyme catalyses alpha-D-glucosamine 1-phosphate = D-glucosamine 6-phosphate. Its function is as follows. Catalyzes the conversion of glucosamine-6-phosphate to glucosamine-1-phosphate. The protein is Phosphoglucosamine mutase of Geotalea daltonii (strain DSM 22248 / JCM 15807 / FRC-32) (Geobacter daltonii).